The chain runs to 608 residues: MEMESSAASTRFHQPHMERKMSAMTCEIFNELRLEGKLCDVVIKVNGFEFNAHKNILCSCSSYFRALFTSGWNNTEKKVYNIPGISPDMMKLIIEYAYTRTVPITPDNVEKLLAAADQFNIMGIVRGCCEFLKSELCLDNCIGICKFTDYYYCPELRQKAYMFILHNFEEMVKVSAEFLELSVTELKDIIEKDELNVKQEDAVFEAILKWISHDPQNRKQHISVLLPKVRLALMHAEYFMNNVKMNDYVKDSEECKPVIINALKAMYDLNMNGPSNSDFTNPLTRPRLPYAILFAIGGWSGGSPTNAIEAYDARADRWVNVTCEEESPRAYHGAAYLKGYVYIIGGFDSVDYFNSVKRFDPVKKTWHQVAPMHSRRCYVSVTVLSNFIYAMGGFDGYVRLNTAERYEPETNQWTLIAPMHEQRSDASATTLYGKVYICGGFNGNECLFTAEVYNTESNQWTVIAPMRSRRSGIGVIAYGEHVYAVGGFDGANRLRSAEAYSPVANTWRTIPTMFNPRSNFGIEVVDDLLFVVGGFNGFTTTFNVECYDEKTDEWYDAHDMSIYRSALSCCVVPGLANVGEYAARRDNFTGLALRDEVKYSASTSTLPV.

In terms of domain architecture, BTB spans 39-106 (CDVVIKVNGF…AYTRTVPITP (68 aa)). Kelch repeat units lie at residues 292 to 339 (ILFA…YLKG), 340 to 386 (YVYI…VLSN), 388 to 433 (IYAM…TLYG), 434 to 480 (KVYI…AYGE), 481 to 527 (HVYA…VVDD), and 529 to 574 (LFVV…VVPG). S501 carries the post-translational modification Phosphoserine.

Self-associates. Interacts with CUL3; indicative for the participation in an E3 ubiquitin ligase complex.

It localises to the cytoplasm. It functions in the pathway protein modification; protein ubiquitination. Functionally, may be a substrate-specific adapter of a CUL3-based E3 ubiquitin-protein ligase complex which mediates the ubiquitination and subsequent proteasomal degradation of target proteins during spermatogenesis. This is Kelch-like protein 10 (Klhl10) from Rattus norvegicus (Rat).